The primary structure comprises 93 residues: Co-chaperonin GroES (93 aa).

The protein belongs to the GroES chaperonin family. In terms of assembly, heptamer of 7 subunits arranged in a ring. Interacts with the chaperonin GroEL.

The protein localises to the cytoplasm. Its function is as follows. Together with the chaperonin GroEL, plays an essential role in assisting protein folding. The GroEL-GroES system forms a nano-cage that allows encapsulation of the non-native substrate proteins and provides a physical environment optimized to promote and accelerate protein folding. GroES binds to the apical surface of the GroEL ring, thereby capping the opening of the GroEL channel. The polypeptide is Co-chaperonin GroES (Streptococcus gordonii (strain Challis / ATCC 35105 / BCRC 15272 / CH1 / DL1 / V288)).